We begin with the raw amino-acid sequence, 554 residues long: ATP synthase subunit alpha (554 aa).

172–179 (GDRKTGKT) lines the ATP pocket. The disordered stretch occupies residues 528-554 (LDEEELEKESVKVKKPAPEKKAKKEQK). A compositionally biased stretch (basic and acidic residues) spans 535-554 (KESVKVKKPAPEKKAKKEQK).

Belongs to the ATPase alpha/beta chains family. As to quaternary structure, F-type ATPases have 2 components, CF(1) - the catalytic core - and CF(0) - the membrane proton channel. CF(1) has five subunits: alpha(3), beta(3), gamma(1), delta(1), epsilon(1). CF(0) has three main subunits: a(1), b(2) and c(9-12). The alpha and beta chains form an alternating ring which encloses part of the gamma chain. CF(1) is attached to CF(0) by a central stalk formed by the gamma and epsilon chains, while a peripheral stalk is formed by the delta and b chains.

It is found in the cell membrane. The catalysed reaction is ATP + H2O + 4 H(+)(in) = ADP + phosphate + 5 H(+)(out). Functionally, produces ATP from ADP in the presence of a proton gradient across the membrane. The alpha chain is a regulatory subunit. This Mycolicibacterium paratuberculosis (strain ATCC BAA-968 / K-10) (Mycobacterium paratuberculosis) protein is ATP synthase subunit alpha.